The following is a 349-amino-acid chain: Protein-glutamate methylesterase/protein-glutamine glutaminase (349 aa).

The Response regulatory domain occupies 5-122; the sequence is RVLSVDDSAL…REGMLAYSEM (118 aa). Position 56 is a 4-aspartylphosphate (D56). The 193-residue stretch at 152–344 folds into the CheB-type methylesterase domain; it reads LLSSEKLIAI…QQMLAKISAG (193 aa). Catalysis depends on residues S164, H190, and D286.

It belongs to the CheB family. Post-translationally, phosphorylated by CheA. Phosphorylation of the N-terminal regulatory domain activates the methylesterase activity.

It localises to the cytoplasm. The catalysed reaction is [protein]-L-glutamate 5-O-methyl ester + H2O = L-glutamyl-[protein] + methanol + H(+). It catalyses the reaction L-glutaminyl-[protein] + H2O = L-glutamyl-[protein] + NH4(+). Functionally, involved in chemotaxis. Part of a chemotaxis signal transduction system that modulates chemotaxis in response to various stimuli. Catalyzes the demethylation of specific methylglutamate residues introduced into the chemoreceptors (methyl-accepting chemotaxis proteins or MCP) by CheR. Also mediates the irreversible deamidation of specific glutamine residues to glutamic acid. This is Protein-glutamate methylesterase/protein-glutamine glutaminase from Escherichia coli O157:H7.